A 243-amino-acid polypeptide reads, in one-letter code: Tubulin-folding cofactor B (243 aa).

Positions 181 to 223 (RAESLGPGYWVGIQYDEPLGKHDGMVKGTRFFECPRLQGGMVR) constitute a CAP-Gly domain.

Belongs to the TBCB family. In terms of assembly, supercomplex made of cofactors A to E. Cofactors A and D function by capturing and stabilizing tubulin in a quasi-native conformation. Cofactor E binds to the cofactor D-tubulin complex; interaction with cofactor C then causes the release of tubulin polypeptides that are committed to the native state. Interacts with TUBA6. As to expression, expressed in roots, stems, leaves, flowers and siliques.

It is found in the cytoplasm. Functionally, involved in control of cell division. Regulates probably the availability of alpha-tubulin for dimerization of alpha-/beta-tubulin, which is required for proper microtubule biogenesis. Decreased expression of TFCB results in enlarged mesophyll cells and leaf epidermal cells with bulged nuclei, increased ploidy and increased numbers of spindles and phragmoplasts. The chain is Tubulin-folding cofactor B (TFCB) from Arabidopsis thaliana (Mouse-ear cress).